We begin with the raw amino-acid sequence, 191 residues long: Photosystem I assembly protein Ycf4 (191 aa).

2 helical membrane passes run 34–54 and 68–88; these read VASMLSIGGVGFLLASFSSYF and IFVPQGLVMGLYGLAAFLLAI.

The protein belongs to the Ycf4 family.

It localises to the cellular thylakoid membrane. Its function is as follows. Seems to be required for the assembly of the photosystem I complex. This is Photosystem I assembly protein Ycf4 from Prochlorococcus marinus (strain NATL1A).